A 367-amino-acid polypeptide reads, in one-letter code: 4-hydroxy-3-methylbut-2-en-1-yl diphosphate synthase (flavodoxin) (367 aa).

[4Fe-4S] cluster is bound by residues C270, C273, C305, and E312.

The protein belongs to the IspG family. The cofactor is [4Fe-4S] cluster.

The enzyme catalyses (2E)-4-hydroxy-3-methylbut-2-enyl diphosphate + oxidized [flavodoxin] + H2O + 2 H(+) = 2-C-methyl-D-erythritol 2,4-cyclic diphosphate + reduced [flavodoxin]. It participates in isoprenoid biosynthesis; isopentenyl diphosphate biosynthesis via DXP pathway; isopentenyl diphosphate from 1-deoxy-D-xylulose 5-phosphate: step 5/6. Its function is as follows. Converts 2C-methyl-D-erythritol 2,4-cyclodiphosphate (ME-2,4cPP) into 1-hydroxy-2-methyl-2-(E)-butenyl 4-diphosphate. The chain is 4-hydroxy-3-methylbut-2-en-1-yl diphosphate synthase (flavodoxin) from Buchnera aphidicola subsp. Schizaphis graminum (strain Sg).